A 365-amino-acid polypeptide reads, in one-letter code: Probable L-tyrosine/L-aspartate decarboxylase (365 aa).

At K225 the chain carries N6-(pyridoxal phosphate)lysine.

This sequence belongs to the group II decarboxylase family. MfnA subfamily. Requires pyridoxal 5'-phosphate as cofactor.

The catalysed reaction is L-tyrosine + H(+) = tyramine + CO2. It carries out the reaction L-aspartate + H(+) = beta-alanine + CO2. The protein operates within cofactor biosynthesis; methanofuran biosynthesis. It participates in cofactor biosynthesis; coenzyme A biosynthesis. Its function is as follows. Catalyzes the decarboxylation of L-tyrosine to produce tyramine for methanofuran biosynthesis. Can also catalyze the decarboxylation of L-aspartate to produce beta-alanine for coenzyme A (CoA) biosynthesis. In Methanocorpusculum labreanum (strain ATCC 43576 / DSM 4855 / Z), this protein is Probable L-tyrosine/L-aspartate decarboxylase.